Here is a 662-residue protein sequence, read N- to C-terminus: PAN2-PAN3 deadenylation complex subunit PAN3 (662 aa).

Disordered stretches follow at residues 1–29 and 53–133; these read MASA…NAKD and DPHK…DTVT. The C3H1-type zinc-finger motif lies at 26-55; sequence NAKDTLCRNITIYGRCRYEDKGCAFNHDPH. Positions 75 to 102 are enriched in low complexity; it reads SFTPSLLSSNGSSPTSTPATTKKMTTIS. Over residues 115 to 133 the composition is skewed to polar residues; the sequence is SVVSRSNASTPGLRQDTVT. The tract at residues 263–525 is pseudokinase domain; the sequence is QTLPNTQLPA…NIDVFITGIS (263 aa). ATP is bound by residues Arg-315, 364 to 371, and 425 to 426; these read DYHPLSKT and SK. Residues 526-564 adopt a coiled-coil conformation; the sequence is SQLMSTFDSALHLDDQLTSDLSRELENGRLVRLMAKLNF. The knob domain stretch occupies residues 565–662; sequence VNERPEYEHD…ALMKPARRMH (98 aa).

This sequence belongs to the protein kinase superfamily. PAN3 family. Homodimer. Forms a heterotrimer with a catalytic subunit pan2 to form the poly(A)-nuclease (PAN) deadenylation complex. Interacts (via PAM-2 motif) with poly(A)-binding protein pab1 (via PABC domain), conferring substrate specificity of the enzyme complex.

The protein resides in the cytoplasm. In terms of biological role, regulatory subunit of the poly(A)-nuclease (PAN) deadenylation complex, one of two cytoplasmic mRNA deadenylases involved in mRNA turnover. PAN specifically shortens poly(A) tails of RNA and the activity is stimulated by poly(A)-binding protein pab1. PAN deadenylation is followed by rapid degradation of the shortened mRNA tails by the CCR4-NOT complex. Deadenylated mRNAs are then degraded by two alternative mechanisms, namely exosome-mediated 3'-5' exonucleolytic degradation, or deadenylation-dependent mRNA decaping and subsequent 5'-3' exonucleolytic degradation by xrn1. May also be involved in post-transcriptional maturation of mRNA poly(A) tails. pan3 acts as a positive regulator for PAN activity, recruiting the catalytic subunit pan2 to mRNA via its interaction with RNA and with pab1. The chain is PAN2-PAN3 deadenylation complex subunit PAN3 from Aspergillus fumigatus (strain ATCC MYA-4609 / CBS 101355 / FGSC A1100 / Af293) (Neosartorya fumigata).